A 148-amino-acid chain; its full sequence is Large ribosomal subunit protein bL9 (148 aa).

The protein belongs to the bacterial ribosomal protein bL9 family.

In terms of biological role, binds to the 23S rRNA. The polypeptide is Large ribosomal subunit protein bL9 (Bacillus cereus (strain ATCC 10987 / NRS 248)).